Consider the following 200-residue polypeptide: Recombination protein RecR (200 aa).

The C4-type zinc-finger motif lies at 59–74 (CDICGNVCETSPCPVC). A Toprim domain is found at 82–177 (SVICVVEEPK…KVTRLASGLP (96 aa)).

It belongs to the RecR family.

May play a role in DNA repair. It seems to be involved in an RecBC-independent recombinational process of DNA repair. It may act with RecF and RecO. The protein is Recombination protein RecR of Bifidobacterium adolescentis (strain ATCC 15703 / DSM 20083 / NCTC 11814 / E194a).